Consider the following 132-residue polypeptide: uncharacterized protein (132 aa).

This sequence to M.jannaschii MJ0661.

This is an uncharacterized protein from Helicobacter pylori (strain ATCC 700392 / 26695) (Campylobacter pylori).